The chain runs to 287 residues: Formamidopyrimidine-DNA glycosylase (287 aa).

Residue proline 2 is the Schiff-base intermediate with DNA of the active site. The active-site Proton donor is the glutamate 3. Lysine 61 functions as the Proton donor; for beta-elimination activity in the catalytic mechanism. 3 residues coordinate DNA: histidine 95, arginine 115, and arginine 157. The FPG-type zinc-finger motif lies at 243 to 277 (NVYGRADQPCRRCGEPVRREAFMNRSSFSCPRCQP). Arginine 267 acts as the Proton donor; for delta-elimination activity in catalysis.

It belongs to the FPG family. As to quaternary structure, monomer. Requires Zn(2+) as cofactor.

The catalysed reaction is Hydrolysis of DNA containing ring-opened 7-methylguanine residues, releasing 2,6-diamino-4-hydroxy-5-(N-methyl)formamidopyrimidine.. It carries out the reaction 2'-deoxyribonucleotide-(2'-deoxyribose 5'-phosphate)-2'-deoxyribonucleotide-DNA = a 3'-end 2'-deoxyribonucleotide-(2,3-dehydro-2,3-deoxyribose 5'-phosphate)-DNA + a 5'-end 5'-phospho-2'-deoxyribonucleoside-DNA + H(+). In terms of biological role, involved in base excision repair of DNA damaged by oxidation or by mutagenic agents. Acts as a DNA glycosylase that recognizes and removes damaged bases. Has a preference for oxidized purines, such as 7,8-dihydro-8-oxoguanine (8-oxoG). Has AP (apurinic/apyrimidinic) lyase activity and introduces nicks in the DNA strand. Cleaves the DNA backbone by beta-delta elimination to generate a single-strand break at the site of the removed base with both 3'- and 5'-phosphates. The polypeptide is Formamidopyrimidine-DNA glycosylase (Salinispora tropica (strain ATCC BAA-916 / DSM 44818 / JCM 13857 / NBRC 105044 / CNB-440)).